The primary structure comprises 431 residues: tRNA(Ile)-lysidine synthase (431 aa).

An ATP-binding site is contributed by 19–24 (STGIDS).

This sequence belongs to the tRNA(Ile)-lysidine synthase family.

It is found in the cytoplasm. It carries out the reaction cytidine(34) in tRNA(Ile2) + L-lysine + ATP = lysidine(34) in tRNA(Ile2) + AMP + diphosphate + H(+). Its function is as follows. Ligates lysine onto the cytidine present at position 34 of the AUA codon-specific tRNA(Ile) that contains the anticodon CAU, in an ATP-dependent manner. Cytidine is converted to lysidine, thus changing the amino acid specificity of the tRNA from methionine to isoleucine. This is tRNA(Ile)-lysidine synthase from Staphylococcus aureus (strain MW2).